The primary structure comprises 183 residues: Protein Dr1 (183 aa).

The Histone-fold domain maps to 19 to 82 (TLPRASINKI…INAEHVLEAL (64 aa)). Residues 92-183 (QEAEAVLHDC…DDDDDDDDDY (92 aa)) form a repression of TATA-containing promoters region. Residues 155-183 (AMVQRPPLADGSVASKPSEDDDDDDDDDY) are disordered. Acidic residues predominate over residues 173 to 183 (EDDDDDDDDDY).

The protein belongs to the NC2 beta/DR1 family. In terms of assembly, component of the Ada2a-containing (ATAC) complex composed of at least Ada2a, Atac1, Hcf, Ada3, Gcn5, Mocs2B, Charac-14, Atac3, Atac2, NC2beta and wds. Homodimer. Interacts with NC2-alpha/Drap1 to form the dNC2 complex.

The protein localises to the nucleus. Functionally, bifunctional basic transcription factor. Activates transcription of DPE (Downstream Promoter Element) containing promoters while repressing transcription of promoters which contain TATA elements. Together with Chrac-14, promotes nucleosome sliding of ATP-dependent nucleosome remodeling complexes. The polypeptide is Protein Dr1 (NC2beta) (Drosophila melanogaster (Fruit fly)).